The chain runs to 432 residues: Homogentisate 1,2-dioxygenase (432 aa).

Residue histidine 286 is the Proton acceptor of the active site. 2 residues coordinate Fe cation: histidine 329 and glutamate 335. Residues tyrosine 344 and histidine 365 each coordinate homogentisate. Residue histidine 365 participates in Fe cation binding.

It belongs to the homogentisate dioxygenase family. In terms of assembly, hexamer; dimer of trimers. Requires Fe cation as cofactor.

The catalysed reaction is homogentisate + O2 = 4-maleylacetoacetate + H(+). It functions in the pathway amino-acid degradation; L-phenylalanine degradation; acetoacetate and fumarate from L-phenylalanine: step 4/6. Functionally, involved in the catabolism of homogentisate (2,5-dihydroxyphenylacetate or 2,5-OH-PhAc), a central intermediate in the degradation of phenylalanine and tyrosine. Catalyzes the oxidative ring cleavage of the aromatic ring of homogentisate to yield maleylacetoacetate. The polypeptide is Homogentisate 1,2-dioxygenase (Bordetella pertussis (strain Tohama I / ATCC BAA-589 / NCTC 13251)).